The chain runs to 287 residues: Eukaryotic translation initiation factor 3 subunit G (287 aa).

Positions 163–207 (EEDLESKEKDTKLGPTVPGSGKYVAPGMRGDRPAVTGGAERRSEE) are disordered. Positions 208–286 (NTCRVTNLPE…LVLKVEWTRF (79 aa)) constitute an RRM domain.

Belongs to the eIF-3 subunit G family. In terms of assembly, component of the eukaryotic translation initiation factor 3 (eIF-3) complex.

The protein localises to the cytoplasm. RNA-binding component of the eukaryotic translation initiation factor 3 (eIF-3) complex, which is involved in protein synthesis of a specialized repertoire of mRNAs and, together with other initiation factors, stimulates binding of mRNA and methionyl-tRNAi to the 40S ribosome. The eIF-3 complex specifically targets and initiates translation of a subset of mRNAs involved in cell proliferation. This subunit can bind 18S rRNA. The protein is Eukaryotic translation initiation factor 3 subunit G of Brugia malayi (Filarial nematode worm).